We begin with the raw amino-acid sequence, 426 residues long: Glutamate-1-semialdehyde 2,1-aminomutase (426 aa).

The residue at position 264 (K264) is an N6-(pyridoxal phosphate)lysine.

Belongs to the class-III pyridoxal-phosphate-dependent aminotransferase family. HemL subfamily. Requires pyridoxal 5'-phosphate as cofactor.

The protein resides in the cytoplasm. The catalysed reaction is (S)-4-amino-5-oxopentanoate = 5-aminolevulinate. It participates in porphyrin-containing compound metabolism; protoporphyrin-IX biosynthesis; 5-aminolevulinate from L-glutamyl-tRNA(Glu): step 2/2. The sequence is that of Glutamate-1-semialdehyde 2,1-aminomutase from Methanocella arvoryzae (strain DSM 22066 / NBRC 105507 / MRE50).